The following is a 154-amino-acid chain: Ubiquitin-conjugating enzyme E2 L3 (154 aa).

Residues 2–149 (AASRRLMKEL…AEEFTKKYGE (148 aa)) enclose the UBC core domain. The active-site Glycyl thioester intermediate is Cys86. Position 131 is an N6-acetyllysine (Lys131).

It belongs to the ubiquitin-conjugating enzyme family. As to quaternary structure, interacts with PRKN; involved in ubiquitination and degradation of misfolded proteins. Interacts with UBE3A. Interacts with CCNB1IP1, CBL, ZAP70, RNF19A, RNF19B and RNF144B. Interacts with ARIH1. Interacts with ARIH2 (via RING-type 1). Interacts with NCOA1; they functionally interact to regulate progesterone receptor transcriptional activity. Interacts with NDFIP1 (via N-terminus); the interaction mediates recruitment of UBE2L3 to ITCH and causes MAP3K7 ubiquitination. Ubiquitinated. The alteration of UBE2L3 protein levels during the S-phase of the cell cycle is due to ubiquitin-dependent proteasomal degradation. Autoubiquitinated in vitro.

It is found in the nucleus. It localises to the cytoplasm. It catalyses the reaction S-ubiquitinyl-[E1 ubiquitin-activating enzyme]-L-cysteine + [E2 ubiquitin-conjugating enzyme]-L-cysteine = [E1 ubiquitin-activating enzyme]-L-cysteine + S-ubiquitinyl-[E2 ubiquitin-conjugating enzyme]-L-cysteine.. It functions in the pathway protein modification; protein ubiquitination. Functionally, ubiquitin-conjugating enzyme E2 that specifically acts with HECT-type and RBR family E3 ubiquitin-protein ligases. Does not function with most RING-containing E3 ubiquitin-protein ligases because it lacks intrinsic E3-independent reactivity with lysine: in contrast, it has activity with the RBR family E3 enzymes, such as PRKN, RNF31 and ARIH1, that function like RING-HECT hybrids. Accepts ubiquitin from the E1 complex and catalyzes its covalent attachment to other proteins. Mediates ubiquitination by the CUL9-RBX1 complex. In vitro catalyzes 'Lys-11'-linked polyubiquitination. Involved in the selective degradation of short-lived and abnormal proteins. Down-regulated during the S-phase it is involved in progression through the cell cycle. Regulates nuclear hormone receptors transcriptional activity. May play a role in myelopoiesis. The chain is Ubiquitin-conjugating enzyme E2 L3 (UBE2L3) from Bos taurus (Bovine).